A 471-amino-acid chain; its full sequence is A-type ATP synthase subunit B (471 aa).

The protein belongs to the ATPase alpha/beta chains family. Has multiple subunits with at least A(3), B(3), C, D, E, F, H, I and proteolipid K(x).

Its subcellular location is the cell membrane. In terms of biological role, component of the A-type ATP synthase that produces ATP from ADP in the presence of a proton gradient across the membrane. The B chain is a regulatory subunit. The polypeptide is A-type ATP synthase subunit B (Natronomonas pharaonis (strain ATCC 35678 / DSM 2160 / CIP 103997 / JCM 8858 / NBRC 14720 / NCIMB 2260 / Gabara) (Halobacterium pharaonis)).